The following is a 611-amino-acid chain: Actin-related protein 5 (611 aa).

Coiled coils occupy residues 290–329 (TLTS…LDRL) and 355–386 (SAEE…NIEV).

Belongs to the actin family. ARP5 subfamily. In terms of assembly, component of the chromatin remodeling INO80 complex.

The protein localises to the nucleus. Functionally, proposed core component of the chromatin remodeling INO80 complex which is involved in transcriptional regulation, DNA replication and probably DNA repair. The chain is Actin-related protein 5 (ACTR5) from Gallus gallus (Chicken).